A 945-amino-acid chain; its full sequence is Isoleucine--tRNA ligase (945 aa).

Positions 67-77 (PYANGQIHLGH) match the 'HIGH' region motif. Glu-573 is a binding site for L-isoleucyl-5'-AMP. The short motif at 614 to 618 (KMSKS) is the 'KMSKS' region element. Lys-617 contacts ATP. The Zn(2+) site is built by Cys-908, Cys-911, Cys-928, and Cys-931.

It belongs to the class-I aminoacyl-tRNA synthetase family. IleS type 1 subfamily. As to quaternary structure, monomer. The cofactor is Zn(2+).

It localises to the cytoplasm. The catalysed reaction is tRNA(Ile) + L-isoleucine + ATP = L-isoleucyl-tRNA(Ile) + AMP + diphosphate. Functionally, catalyzes the attachment of isoleucine to tRNA(Ile). As IleRS can inadvertently accommodate and process structurally similar amino acids such as valine, to avoid such errors it has two additional distinct tRNA(Ile)-dependent editing activities. One activity is designated as 'pretransfer' editing and involves the hydrolysis of activated Val-AMP. The other activity is designated 'posttransfer' editing and involves deacylation of mischarged Val-tRNA(Ile). The protein is Isoleucine--tRNA ligase of Acinetobacter baylyi (strain ATCC 33305 / BD413 / ADP1).